A 244-amino-acid polypeptide reads, in one-letter code: Cell division protein ZipA (244 aa).

Residues 1 to 4 (MSDM) are Periplasmic-facing. The chain crosses the membrane as a helical span at residues 5 to 25 (AMIRIGILIAGLLLVAAIFLF). Residues 26 to 244 (GRPKKSPQGR…APPLTKSPRW (219 aa)) lie on the Cytoplasmic side of the membrane. Positions 30–91 (KSPQGRRVDK…GAGGNDVGKR (62 aa)) are disordered. Over residues 35 to 50 (RRVDKDDTQPRERREP) the composition is skewed to basic and acidic residues.

It belongs to the ZipA family. In terms of assembly, interacts with FtsZ via their C-terminal domains.

It is found in the cell inner membrane. Its function is as follows. Essential cell division protein that stabilizes the FtsZ protofilaments by cross-linking them and that serves as a cytoplasmic membrane anchor for the Z ring. Also required for the recruitment to the septal ring of downstream cell division proteins. This is Cell division protein ZipA from Xanthomonas campestris pv. campestris (strain ATCC 33913 / DSM 3586 / NCPPB 528 / LMG 568 / P 25).